The sequence spans 91 residues: Probable Fe(2+)-trafficking protein (91 aa).

It belongs to the Fe(2+)-trafficking protein family.

Functionally, could be a mediator in iron transactions between iron acquisition and iron-requiring processes, such as synthesis and/or repair of Fe-S clusters in biosynthetic enzymes. In Thiobacillus denitrificans (strain ATCC 25259 / T1), this protein is Probable Fe(2+)-trafficking protein.